The sequence spans 158 residues: 2-C-methyl-D-erythritol 2,4-cyclodiphosphate synthase (158 aa).

2 residues coordinate a divalent metal cation: D8 and H10. Residues 8-10 (DAH) and 34-35 (HS) each bind 4-CDP-2-C-methyl-D-erythritol 2-phosphate. H42 provides a ligand contact to a divalent metal cation. Residues 56–58 (DIG), 132–135 (TTTE), and R142 each bind 4-CDP-2-C-methyl-D-erythritol 2-phosphate.

Belongs to the IspF family. Homotrimer. A divalent metal cation serves as cofactor.

It carries out the reaction 4-CDP-2-C-methyl-D-erythritol 2-phosphate = 2-C-methyl-D-erythritol 2,4-cyclic diphosphate + CMP. It functions in the pathway isoprenoid biosynthesis; isopentenyl diphosphate biosynthesis via DXP pathway; isopentenyl diphosphate from 1-deoxy-D-xylulose 5-phosphate: step 4/6. Its function is as follows. Involved in the biosynthesis of isopentenyl diphosphate (IPP) and dimethylallyl diphosphate (DMAPP), two major building blocks of isoprenoid compounds. Catalyzes the conversion of 4-diphosphocytidyl-2-C-methyl-D-erythritol 2-phosphate (CDP-ME2P) to 2-C-methyl-D-erythritol 2,4-cyclodiphosphate (ME-CPP) with a corresponding release of cytidine 5-monophosphate (CMP). The protein is 2-C-methyl-D-erythritol 2,4-cyclodiphosphate synthase of Nitrosococcus oceani (strain ATCC 19707 / BCRC 17464 / JCM 30415 / NCIMB 11848 / C-107).